The chain runs to 274 residues: Protein YeeZ (274 aa).

Residues 1 to 24 (MKKVAIVGLGWLGMPLAMSLSARG) form the signal peptide. 170-177 (GRFFAGKT) is an ATP binding site.

In Escherichia coli O157:H7, this protein is Protein YeeZ (yeeZ).